The sequence spans 133 residues: Large ribosomal subunit protein uL14 (133 aa).

This sequence belongs to the universal ribosomal protein uL14 family. Part of the 50S ribosomal subunit. Forms a cluster with proteins L3 and L19. In the 70S ribosome, L14 and L19 interact and together make contacts with the 16S rRNA in bridges B5 and B8.

In terms of biological role, binds to 23S rRNA. Forms part of two intersubunit bridges in the 70S ribosome. The polypeptide is Large ribosomal subunit protein uL14 (Gloeobacter violaceus (strain ATCC 29082 / PCC 7421)).